Consider the following 270-residue polypeptide: Phosphatidate cytidylyltransferase (270 aa).

Helical transmembrane passes span 19 to 39, 53 to 73, 76 to 96, 101 to 121, 126 to 146, 183 to 203, and 248 to 268; these read LWLT…IGLA, TAFS…LLIL, GALL…VTQW, GWPA…SLLR, FGFT…ITAY, LVAS…ALLL, and ALLY…AIFF.

This sequence belongs to the CDS family.

The protein localises to the cell inner membrane. It carries out the reaction a 1,2-diacyl-sn-glycero-3-phosphate + CTP + H(+) = a CDP-1,2-diacyl-sn-glycerol + diphosphate. Its pathway is phospholipid metabolism; CDP-diacylglycerol biosynthesis; CDP-diacylglycerol from sn-glycerol 3-phosphate: step 3/3. This is Phosphatidate cytidylyltransferase (cdsA) from Brucella abortus (strain 2308).